The chain runs to 454 residues: Retinoblastoma-binding protein homolog 5 (454 aa).

6 WD repeats span residues 23–64, 65–104, 153–192, 196–235, 248–288, and 292–330; these read LQNA…RTFS, AHCLPVSCLSWSRDGRKLLTSSADNSIAMFDVLAGTLLHR, SSDESASCVSYDRKGKYIIAGTGKGKLLIYNAETLKCVAW, NTVQQIRQIIVPMKSRFIITNTQDRVIRTYELEDLLHQRG, VNKA…LIKI, and NKGEALLDVQWHPTRPIILSIAQGTVSMWTQAHVENWSA.

Component of the SET2 complex (also known as the SET1/COMPASS complex), which contains at least set-2, swd-2.1, cfp-1, rbbp-5, wdr-5.1, dpy-30 and ash-2.

Its subcellular location is the nucleus. Its function is as follows. Required for di- and trimethylation at 'Lys-4' of histone H3. Regulates left/right asymmetry of ASE sensory neurons, via its role as a component of the SET2 complex. The polypeptide is Retinoblastoma-binding protein homolog 5 (rbbp-5) (Caenorhabditis elegans).